Consider the following 339-residue polypeptide: Phenylalanine--tRNA ligase alpha subunit (339 aa).

Mg(2+) is bound at residue E253.

It belongs to the class-II aminoacyl-tRNA synthetase family. Phe-tRNA synthetase alpha subunit type 1 subfamily. As to quaternary structure, tetramer of two alpha and two beta subunits. The cofactor is Mg(2+).

It localises to the cytoplasm. It catalyses the reaction tRNA(Phe) + L-phenylalanine + ATP = L-phenylalanyl-tRNA(Phe) + AMP + diphosphate + H(+). The sequence is that of Phenylalanine--tRNA ligase alpha subunit from Alcanivorax borkumensis (strain ATCC 700651 / DSM 11573 / NCIMB 13689 / SK2).